The primary structure comprises 306 residues: 33 kDa chaperonin (306 aa).

2 disulfides stabilise this stretch: cysteine 242/cysteine 244 and cysteine 275/cysteine 278.

Belongs to the HSP33 family. Under oxidizing conditions two disulfide bonds are formed involving the reactive cysteines. Under reducing conditions zinc is bound to the reactive cysteines and the protein is inactive.

The protein resides in the cytoplasm. Redox regulated molecular chaperone. Protects both thermally unfolding and oxidatively damaged proteins from irreversible aggregation. Plays an important role in the bacterial defense system toward oxidative stress. This chain is 33 kDa chaperonin, found in Gloeobacter violaceus (strain ATCC 29082 / PCC 7421).